A 98-amino-acid chain; its full sequence is Conotoxin Di19A (98 aa).

A signal peptide spans 1-19 (MSTLGILLPIALLLPLANP). Residues 20–49 (AENGDGQAMPRTRNLRSLSFGRTLRRLEKR) constitute a propeptide that is removed on maturation. P53 carries the post-translational modification 4-hydroxyproline. Position 63 is a 4-carboxyglutamate (E63). A 4-hydroxyproline mark is found at P68, P93, and P97.

Post-translationally, contains 5 disulfide bonds. As to expression, expressed by the venom duct.

It is found in the secreted. In terms of biological role, injection of the synthetic peptide causes a hyperexcitable phenotype in mice greater than three weeks of age at lower doses, and lethargy at higher doses. This Conus distans (Distant cone) protein is Conotoxin Di19A.